The following is a 208-amino-acid chain: Small ribosomal subunit protein uS3 (208 aa).

The 70-residue stretch at 17–86 folds into the KH type-2 domain; it reads IDEYLEKELR…NPQIEVEEIK (70 aa).

It belongs to the universal ribosomal protein uS3 family. As to quaternary structure, part of the 30S ribosomal subunit.

Its function is as follows. Binds the lower part of the 30S subunit head. The protein is Small ribosomal subunit protein uS3 of Thermococcus onnurineus (strain NA1).